The following is a 121-amino-acid chain: Perlustrin-like protein (121 aa).

A signal peptide spans 1–23 (MKFGVGFLLSCLVALNTVQNMLA). Residues 24 to 104 (LSCLPCDFDT…FDFKGTCQES (81 aa)) enclose the IGFBP N-terminal domain. Disulfide bonds link cysteine 26–cysteine 52, cysteine 29–cysteine 54, cysteine 36–cysteine 55, cysteine 45–cysteine 58, cysteine 66–cysteine 79, and cysteine 73–cysteine 101. N-linked (GlcNAc...) asparagine glycosylation is found at asparagine 68, asparagine 81, and asparagine 117.

In terms of tissue distribution, component of the acid-insoluble organic matrix of calcified layers of the shell (at protein level).

It is found in the secreted. This chain is Perlustrin-like protein, found in Lottia gigantea (Giant owl limpet).